The primary structure comprises 732 residues: Integrator complex subunit 13 (732 aa).

Over residues 564 to 648 (PPEEEERKKR…DETPHMEKSK (85 aa)) the composition is skewed to basic and acidic residues. Positions 564–650 (PPEEEERKKR…TPHMEKSKGP (87 aa)) are disordered. Residues 572–582 (KRGRKREDRED) carry the Nuclear localization signal (NLS) motif. Lys-611 is covalently cross-linked (Glycyl lysine isopeptide (Lys-Gly) (interchain with G-Cter in SUMO2)). 3 positions are modified to phosphoserine: Ser-623, Ser-626, and Ser-678. Residues 649 to 694 (GPVSLLSLWSNRINTANSRKHQEFAGRLNSVNNRAELYQHLKEENG) form a cleavage module binding motif (CMBM) region.

This sequence belongs to the Integrator subunit 13 family. As to quaternary structure, component of the Integrator complex, composed of core subunits INTS1, INTS2, INTS3, INTS4, INTS5, INTS6, INTS7, INTS8, INTS9/RC74, INTS10, INTS11/CPSF3L, INTS12, INTS13, INTS14 and INTS15. The core complex associates with protein phosphatase 2A subunits PPP2CA and PPP2R1A, to form the Integrator-PP2A (INTAC) complex. INTS13 is part of the tail subcomplex, composed of INTS10, INTS13, INTS14 and INTS15. Interacts with transcription factors ZNF609 and ZNF655. Interacts with PAFAH1B1; this interaction may be required for proper recruitment of dynein complexes to the nuclear envelope at prophase.

It is found in the nucleus. Its subcellular location is the cytoplasm. Its function is as follows. Component of the integrator complex, a multiprotein complex that terminates RNA polymerase II (Pol II) transcription in the promoter-proximal region of genes. The integrator complex provides a quality checkpoint during transcription elongation by driving premature transcription termination of transcripts that are unfavorably configured for transcriptional elongation: the complex terminates transcription by (1) catalyzing dephosphorylation of the C-terminal domain (CTD) of Pol II subunit POLR2A/RPB1 and SUPT5H/SPT5, (2) degrading the exiting nascent RNA transcript via endonuclease activity and (3) promoting the release of Pol II from bound DNA. The integrator complex is also involved in terminating the synthesis of non-coding Pol II transcripts, such as enhancer RNAs (eRNAs), small nuclear RNAs (snRNAs), telomerase RNAs and long non-coding RNAs (lncRNAs). Within the integrator complex, INTS13 is part of the integrator tail module and acts as a platform for the recruitment of transcription factors at promoters. At prophase, mediates recruitment of cytoplasmic dynein to the nuclear envelope, a step important for proper centrosome-nucleus coupling. At G2/M phase, may be required for proper spindle formation and execution of cytokinesis. The chain is Integrator complex subunit 13 from Mus musculus (Mouse).